Here is a 144-residue protein sequence, read N- to C-terminus: Conopressin-conophysin (144 aa).

A signal peptide spans 1–27; that stretch reads MTRSALQMGRLTLVLCLLLQLVLVTQA. Residues C28 and C33 are joined by a disulfide bond. D36 bears the Aspartic acid 1-amide mark. A propeptide spanning residues 37-44 is cleaved from the precursor; that stretch reads GERDVDGR. 7 cysteine pairs are disulfide-bonded: C50–C90, C53–C64, C58–C80, C65–C70, C97–C117, C109–C129, and C118–C123. The propeptide occupies 131–144; that stretch reads KESKSGIRVGCQRS.

Belongs to the vasopressin/oxytocin family. As to expression, expressed by the venom duct.

The protein localises to the secreted. This is Conopressin-conophysin from Conus bayani (Bayan's cone).